The chain runs to 633 residues: Chaperone protein HtpG (633 aa).

Positions 1-345 (MSADTQSETL…SDDLPLNISR (345 aa)) are a; substrate-binding. Positions 346–562 (EMLQHNPMIS…EYDFGMGMQR (217 aa)) are b. Residues 563 to 633 (LLQAAGHQLP…VRRVNNLLAG (71 aa)) are c.

Belongs to the heat shock protein 90 family. As to quaternary structure, homodimer.

It is found in the cytoplasm. Its function is as follows. Molecular chaperone. Has ATPase activity. The sequence is that of Chaperone protein HtpG from Halorhodospira halophila (strain DSM 244 / SL1) (Ectothiorhodospira halophila (strain DSM 244 / SL1)).